The following is a 307-amino-acid chain: Ribosomal protein L11 methyltransferase (307 aa).

Thr154, Gly178, Asp200, and Asn242 together coordinate S-adenosyl-L-methionine.

Belongs to the methyltransferase superfamily. PrmA family.

The protein localises to the cytoplasm. The catalysed reaction is L-lysyl-[protein] + 3 S-adenosyl-L-methionine = N(6),N(6),N(6)-trimethyl-L-lysyl-[protein] + 3 S-adenosyl-L-homocysteine + 3 H(+). Methylates ribosomal protein L11. In Syntrophotalea carbinolica (strain DSM 2380 / NBRC 103641 / GraBd1) (Pelobacter carbinolicus), this protein is Ribosomal protein L11 methyltransferase.